Consider the following 738-residue polypeptide: LPS-assembly protein LptD (738 aa).

A signal peptide spans 1-26 (MEHKRNNILLAGLFFLLLGLVSIARA).

The protein belongs to the LptD family. Component of the lipopolysaccharide transport and assembly complex. Interacts with LptE and LptA.

It is found in the cell outer membrane. Its function is as follows. Together with LptE, is involved in the assembly of lipopolysaccharide (LPS) at the surface of the outer membrane. The protein is LPS-assembly protein LptD of Nitrosococcus oceani (strain ATCC 19707 / BCRC 17464 / JCM 30415 / NCIMB 11848 / C-107).